A 458-amino-acid chain; its full sequence is Sugar transporter ERD6-like 10 (458 aa).

The next 12 helical transmembrane spans lie at 17–37 (ITACVILSTFVAVCSSFSYGC), 66–86 (FLNLGGAVGALFSGQLAVILG), 96–116 (LFCIFGWLSIAFAKNVLWLDL), 119–139 (ISLGIGVGLTSYVVPVYIAEI), 150–170 (ASTLLLQNSGISLIYFFGTVI), 174–194 (VLAVIGALPCFIPVIGIYFIP), 257–277 (LVVGIGLMLIQQLSGASGITY), 292–312 (LGSMIFGVFVIPKALVGLILV), 319–339 (PLLLASAVGMSIGSLLIGVSF), 350–370 (FIPVFVFINILVYFGFFAIGI), 393–413 (IVALTSWTTGWFVSYGFNFMF), and 419–439 (GTFYIFAMVGGLSLLFIWMLV).

It belongs to the major facilitator superfamily. Sugar transporter (TC 2.A.1.1) family.

The protein localises to the membrane. Its function is as follows. Sugar transporter. This chain is Sugar transporter ERD6-like 10, found in Arabidopsis thaliana (Mouse-ear cress).